Here is a 101-residue protein sequence, read N- to C-terminus: Non-histone chromosomal protein HMG-14 (101 aa).

Positions 1–101 are disordered; the sequence is MPKRKVSSAE…EAEEKEAKSD (101 aa). S7 bears the ADP-ribosylserine mark. Residue S8 is modified to Phosphoserine. An N6-acetyllysine modification is found at K14. S21 is modified (phosphoserine). The residue at position 25 (S25) is an ADP-ribosylserine; alternate. S25 is modified (phosphoserine; alternate). K27 carries the N6-acetyllysine modification. Composition is skewed to basic and acidic residues over residues 33–51 and 70–86; these read VETK…DKKV and ETKE…KNEE. Phosphothreonine is present on T82. K83 is subject to N6-acetyllysine. S87, S90, and S100 each carry phosphoserine.

This sequence belongs to the HMGN family. In terms of assembly, interacts with transcriptional regulator SEHBP. Phosphorylation on Ser-21 and Ser-25 weakens binding to nucleosomes and increases the rate of H3 phosphorylation.

It is found in the nucleus. Binds to the inner side of the nucleosomal DNA thus altering the interaction between the DNA and the histone octamer. May be involved in the process which maintains transcribable genes in a unique chromatin conformation. Inhibits the phosphorylation of nucleosomal histones H3 and H2A by RPS6KA5/MSK1 and RPS6KA3/RSK2. In Bos taurus (Bovine), this protein is Non-histone chromosomal protein HMG-14 (HMGN1).